A 65-amino-acid chain; its full sequence is MSGGLKEQITGKVEKTKGQVKEGIGEVTEDRELKNEGKWEKTKGTIKEKVGKVKQKISDGLDNKE.

The segment at 1–28 (MSGGLKEQITGKVEKTKGQVKEGIGEVT) is disordered. The span at 12–28 (KVEKTKGQVKEGIGEVT) shows a compositional bias: basic and acidic residues.

The protein belongs to the UPF0337 (CsbD) family.

This chain is UPF0337 protein BCE_1081, found in Bacillus cereus (strain ATCC 10987 / NRS 248).